Here is a 943-residue protein sequence, read N- to C-terminus: MASDKSLLRMYGKYANEILSLEPEMKKLANEDFAIKTQELRDRIANGEHVDDLVVEAYALAREAANRVLGLNAYKVQLVGAIILHFGDIAEMRTGEGKTLTGLFPAYLNSLTGKGVHIVTVNEYLSRRDSEINGQVFDLLGVSVGLNGTRMPKNLKREAYHADITYTTNAELGFDYLRDNMVVDKEHKVQRELNFAIIDEADSVLIDEARTPLIISGGSSSRINLYKAADEFAQKVNEKEDIDIDLETKQVYLTETGMKKAKDFFSLENLFALENTEIFHLILNALKAHFTFKEGVEYTVASGEVELIDQFTGRILKGRAYSDGLQQAIQAKEKVEIEEETTTLATITYQNFYRLYAKLSGMTGTAKTEEEEFIKIYNTRVVVCPTNRPVIRKDEPDYTFGTKHAALKKLIQDIKTVNEIGNPILIGTTSVESSEQIARYLEKAGLNFEMINAKNHDREADIVSQAGQKYAITLATNMAGRGTDIKLSQEVKDLGGLVVFGVERNEARRIDNQLRGRSGRQGDPGMSRFYISMEDDLMIRFASPRARKSFLSLGDEHIKSKFFTRAVTNAQKKLEGLNFDQRKNVLDYDNILAQQREAMYAQRDSILWADNLKVVIKKFQITVAYEMIEENSEIVHGEKTLNAEKLLKSIDGKLVAHKRFVAKDFYNKEKMNLAVQLAEAMLEFYKARVIDIPDDVVLQMERKNVLTSFDKYWTRHIDIASKLKAGIYLQQYAQNNPLAVYVEQATELFNKTKIYIASEVVDVLSKIIIRDPEQNVESQKIEITDEIIDDILKSTGLTKANINNKDINAKFDELIAKADNQNDIKKLSIQRDIMLGLVIEIQKRRENSGNKTVNLGKEEIDQMLAILGIDNIGSTSKEEIISKYEEKLKLAEDDKTKNLINIAKDVIIALYEQIELIKKDASSLKSVIDDDNDGGEVAKTRIG.

Residues Gln-77, 95–99 (GEGKT), and Asp-484 each bind ATP.

Belongs to the SecA family. As to quaternary structure, monomer and homodimer. Part of the essential Sec protein translocation apparatus which comprises SecA, SecYEG and auxiliary proteins SecDF. Other proteins may also be involved.

It is found in the cell membrane. It localises to the cytoplasm. The catalysed reaction is ATP + H2O + cellular proteinSide 1 = ADP + phosphate + cellular proteinSide 2.. Its function is as follows. Part of the Sec protein translocase complex. Interacts with the SecYEG preprotein conducting channel. Has a central role in coupling the hydrolysis of ATP to the transfer of proteins into and across the cell membrane, serving as an ATP-driven molecular motor driving the stepwise translocation of polypeptide chains across the membrane. The sequence is that of Protein translocase subunit SecA from Mesoplasma florum (strain ATCC 33453 / NBRC 100688 / NCTC 11704 / L1) (Acholeplasma florum).